The following is a 142-amino-acid chain: Putative pre-16S rRNA nuclease (142 aa).

Belongs to the YqgF nuclease family.

It localises to the cytoplasm. Its function is as follows. Could be a nuclease involved in processing of the 5'-end of pre-16S rRNA. The protein is Putative pre-16S rRNA nuclease of Prosthecochloris aestuarii (strain DSM 271 / SK 413).